A 260-amino-acid chain; its full sequence is Transcription repressor OFP13 (260 aa).

The OVATE domain occupies 150 to 211 (VAMESEDPYG…VSAFVDLLSG (62 aa)).

In terms of tissue distribution, expressed in roots, rosette and cauline leaves, shoots, stems, flower buds and siliques.

The protein resides in the nucleus. Transcriptional repressor that regulates multiple aspects of plant growth and development through the regulation of BEL1-LIKE (BLH) and KNOX TALE (KNAT) homeodomain transcription factors. This is Transcription repressor OFP13 (OFP13) from Arabidopsis thaliana (Mouse-ear cress).